Reading from the N-terminus, the 549-residue chain is Probable glucuronosyltransferase Os01g0157700 (549 aa).

The Cytoplasmic portion of the chain corresponds to 1–16 (MDSEERSKKRLRLWSR). Residues 17 to 37 (AVVHFSLCFAIGVFAALLPLA) traverse the membrane as a helical; Signal-anchor for type II membrane protein segment. Residues 38-549 (ATGATSIDSI…TPEEGKTKEG (512 aa)) are Lumenal-facing. Asn112, Asn139, Asn214, Asn229, Asn240, Asn251, Asn264, Asn269, and Asn300 each carry an N-linked (GlcNAc...) asparagine glycan. A disordered region spans residues 232–252 (ETTWDSSSNTTQTTWDSSSNK). Basic and acidic residues predominate over residues 350-363 (IEQATPEKESLTKG). 3 disordered regions span residues 350–371 (IEQATPEKESLTKGDEEESHDM), 413–432 (EQETPEKENLTKGEEKESHD), and 441–524 (KIEE…KETH). N-linked (GlcNAc...) asparagine glycans are attached at residues Asn421 and Asn452. Composition is skewed to basic and acidic residues over residues 441–465 (KIEEQETPEKENLTKGDEKESHDMM), 472–496 (KIDEQETTEKESLTKGDEKESHDMM), and 503–524 (KIEEQETPEKESLTKGDEKETH).

This sequence belongs to the glycosyltransferase 43 family.

It localises to the golgi apparatus membrane. In terms of biological role, involved in the synthesis of glucuronoxylan hemicellulose in secondary cell walls. This chain is Probable glucuronosyltransferase Os01g0157700, found in Oryza sativa subsp. japonica (Rice).